We begin with the raw amino-acid sequence, 154 residues long: Endoribonuclease YbeY (154 aa).

Positions 113, 117, and 123 each coordinate Zn(2+).

Belongs to the endoribonuclease YbeY family. Zn(2+) serves as cofactor.

The protein resides in the cytoplasm. Functionally, single strand-specific metallo-endoribonuclease involved in late-stage 70S ribosome quality control and in maturation of the 3' terminus of the 16S rRNA. The protein is Endoribonuclease YbeY of Vibrio vulnificus (strain CMCP6).